The sequence spans 152 residues: Chemokine-like factor (152 aa).

Positions 13–133 (FCFSVKGHVK…DGALIYRKLL (121 aa)) constitute an MARVEL domain. 3 helical membrane passes run 45 to 65 (YIVI…LYVL), 81 to 101 (IINS…ALIP), and 108 to 128 (VGGG…GALI).

This sequence belongs to the chemokine-like factor family. Isoform 1, isoform 2, isoform 3 and isoform 4 have highest expression levels in adult spleen, lung, testis, ovary, peripheral blood leukocyte, placenta, pancreas, and in fetal brain, skeletal muscle, thymus and heart. Lower expression levels in adult skeletal muscle, liver, thymus colon, prostate and fetal spleen and liver.

Its subcellular location is the secreted. It is found in the membrane. With respect to regulation, partly inhibited by interleukin 10. May play an important role in inflammation and regeneration of skeletal muscle. Essential for embryonic development. Its function is as follows. Has chemotactic response in monocytes, neutrophils and lymphocytes. Binds CCR4. The chain is Chemokine-like factor (CKLF) from Homo sapiens (Human).